A 224-amino-acid polypeptide reads, in one-letter code: Testis-expressed protein 30 (224 aa).

The sequence is that of Testis-expressed protein 30 (TEX30) from Bos taurus (Bovine).